Here is a 431-residue protein sequence, read N- to C-terminus: uncharacterized protein (431 aa).

2 disordered regions span residues Val-17–Ala-66 and Gly-81–Arg-415. Positions Asp-91 to Ser-106 are enriched in basic and acidic residues. Positions Thr-173 to Lys-195 are enriched in basic residues. A compositionally biased stretch (low complexity) spans Arg-235 to Ala-244. Over residues Arg-299–Gly-312 the composition is skewed to gly residues. Over residues Arg-317–Ala-342 the composition is skewed to low complexity. Positions Pro-343–Gly-360 are enriched in gly residues.

This is an uncharacterized protein from Homo sapiens (Human).